The sequence spans 104 residues: Large ribosomal subunit protein uL24 (104 aa).

It belongs to the universal ribosomal protein uL24 family. Part of the 50S ribosomal subunit.

One of two assembly initiator proteins, it binds directly to the 5'-end of the 23S rRNA, where it nucleates assembly of the 50S subunit. Its function is as follows. One of the proteins that surrounds the polypeptide exit tunnel on the outside of the subunit. The polypeptide is Large ribosomal subunit protein uL24 (Pseudomonas aeruginosa (strain LESB58)).